Consider the following 87-residue polypeptide: U15-lycotoxin-Ls1f (87 aa).

The N-terminal stretch at 1 to 20 (MNSKIFAVLLLLAFLSCVLS) is a signal peptide. A WAP domain is found at 21–66 (DQYCPKSSITACKKMNIRNDCCKDDDCTGGSWCCATPCGNFCKYPT). 5 disulfides stabilise this stretch: cysteine 24–cysteine 54, cysteine 32–cysteine 58, cysteine 41–cysteine 53, cysteine 42–cysteine 80, and cysteine 47–cysteine 62.

The protein belongs to the venom protein 11 family. 01 (wap-1) subfamily. Contains 5 disulfide bonds. As to expression, expressed by the venom gland.

Its subcellular location is the secreted. Functionally, has antibacterial activity. This is U15-lycotoxin-Ls1f from Lycosa singoriensis (Wolf spider).